A 37-amino-acid chain; its full sequence is Potassium channel toxin alpha-KTx 4.8 (37 aa).

Cystine bridges form between Cys-13-Cys-33 and Cys-17-Cys-35.

The protein belongs to the short scorpion toxin superfamily. Potassium channel inhibitor family. Alpha-KTx 04 subfamily. In terms of tissue distribution, expressed by the venom gland.

It localises to the secreted. Its function is as follows. Reversible blocker of voltage-gated potassium channel Kv1.2/KCNA2 (Kd=65 nM) and calcium-activated potassium channels KCa2.2/KCNN2 (Kd=575 nM) and KCa3.1/KCNN4 (Kd=59 nM). In Centruroides margaritatus (Central American bark Scorpion), this protein is Potassium channel toxin alpha-KTx 4.8.